A 540-amino-acid chain; its full sequence is Decreased expression in renal and prostate cancer protein (540 aa).

The span at methionine 1–proline 12 shows a compositional bias: basic and acidic residues. Disordered regions lie at residues methionine 1–alanine 264 and serine 304–glutamine 389. 2 stretches are compositionally biased toward low complexity: residues proline 113–serine 125 and glycine 180–glycine 192. Residues serine 304 to serine 316 are compositionally biased toward polar residues. Phosphoserine is present on serine 313. Residues proline 321 to proline 330 show a composition bias toward low complexity. Position 375 is an asymmetric dimethylarginine (arginine 375). Arginine 403 bears the Omega-N-methylarginine mark. The residue at position 439 (serine 439) is a Phosphoserine. Positions glycine 516–proline 540 are disordered.

It belongs to the DERPC family.

It localises to the nucleus. Potential tumor suppressor. The polypeptide is Decreased expression in renal and prostate cancer protein (Bos taurus (Bovine)).